Reading from the N-terminus, the 300-residue chain is Putative heme-binding peroxidase (300 aa).

Catalysis depends on H39, which acts as the Proton acceptor. 2 disordered regions span residues 44–64 and 116–135; these read YDKS…EAEG and GRTD…LPDA. Residues 116-126 are compositionally biased toward basic and acidic residues; that stretch reads GRTDFADDSRV. H163 serves as a coordination point for heme b. Residue W179 is the Tryptophan radical intermediate of the active site.

Belongs to the peroxidase family. Cytochrome c peroxidase subfamily. The cofactor is heme b.

Functionally, destroys radicals which are normally produced within the cells and which are toxic to biological systems. This chain is Putative heme-binding peroxidase, found in Pyricularia oryzae (strain 70-15 / ATCC MYA-4617 / FGSC 8958) (Rice blast fungus).